A 442-amino-acid polypeptide reads, in one-letter code: GTPase Der (442 aa).

EngA-type G domains follow at residues 3–167 and 177–350; these read PTIV…PPDV and PRIA…AAAM. GTP contacts are provided by residues 9-16, 56-60, 119-122, 183-190, 230-234, and 295-298; these read GRPNVGKS, DTAGF, NKSE, DTAGL, and NKWD. One can recognise a KH-like domain in the interval 351–435; sequence VNLSTPRLTR…PLRIQFRTAH (85 aa).

The protein belongs to the TRAFAC class TrmE-Era-EngA-EngB-Septin-like GTPase superfamily. EngA (Der) GTPase family. In terms of assembly, associates with the 50S ribosomal subunit.

Functionally, GTPase that plays an essential role in the late steps of ribosome biogenesis. This chain is GTPase Der, found in Aromatoleum aromaticum (strain DSM 19018 / LMG 30748 / EbN1) (Azoarcus sp. (strain EbN1)).